The sequence spans 679 residues: DNA ligase (679 aa).

Residues 41-45 (DSVYD), 90-91 (SL), and Glu-120 contribute to the NAD(+) site. The active-site N6-AMP-lysine intermediate is the Lys-122. The NAD(+) site is built by Arg-143, Glu-177, Lys-293, and Lys-317. Cys-411, Cys-414, Cys-429, and Cys-434 together coordinate Zn(2+). One can recognise a BRCT domain in the interval 597–679 (DSNSWFAGKR…SETMREDAQA (83 aa)).

Belongs to the NAD-dependent DNA ligase family. LigA subfamily. Requires Mg(2+) as cofactor. Mn(2+) is required as a cofactor.

It carries out the reaction NAD(+) + (deoxyribonucleotide)n-3'-hydroxyl + 5'-phospho-(deoxyribonucleotide)m = (deoxyribonucleotide)n+m + AMP + beta-nicotinamide D-nucleotide.. Its function is as follows. DNA ligase that catalyzes the formation of phosphodiester linkages between 5'-phosphoryl and 3'-hydroxyl groups in double-stranded DNA using NAD as a coenzyme and as the energy source for the reaction. It is essential for DNA replication and repair of damaged DNA. The protein is DNA ligase of Lactiplantibacillus plantarum (strain ATCC BAA-793 / NCIMB 8826 / WCFS1) (Lactobacillus plantarum).